A 544-amino-acid chain; its full sequence is Prolyl 4-hydroxylase subunit alpha-3 (544 aa).

The signal sequence occupies residues 1–24; the sequence is MGPGARLAALLVLLKLGVGDPAAA. A TPR repeat occupies 227-260; it reads EDALDYLAFACYQVGNVSCALSLSREFLVYSPDN. A glycan (N-linked (GlcNAc...) asparagine) is linked at Asn242. Residues 422 to 529 form the Fe2OG dioxygenase domain; sequence YAEYLQVVNY…KWVANKWIHE (108 aa). Fe cation contacts are provided by His440 and Asp442. An N-linked (GlcNAc...) asparagine glycan is attached at Asn482. Fe cation is bound at residue His510. Lys520 lines the 2-oxoglutarate pocket.

This sequence belongs to the P4HA family. In terms of assembly, heterotetramer of two alpha-3 chains and two beta chains (the beta chain is the multi-functional PDI). Fe(2+) serves as cofactor. L-ascorbate is required as a cofactor. Post-translationally, N-glycosylation plays no role in the catalytic activity.

The protein resides in the endoplasmic reticulum lumen. The catalysed reaction is L-prolyl-[collagen] + 2-oxoglutarate + O2 = trans-4-hydroxy-L-prolyl-[collagen] + succinate + CO2. Its function is as follows. Catalyzes the post-translational formation of 4-hydroxyproline in -Xaa-Pro-Gly- sequences in collagens and other proteins. In Rattus norvegicus (Rat), this protein is Prolyl 4-hydroxylase subunit alpha-3 (P4ha3).